A 503-amino-acid chain; its full sequence is Maturase K (503 aa).

This sequence belongs to the intron maturase 2 family. MatK subfamily.

Its subcellular location is the plastid. It localises to the chloroplast. Its function is as follows. Usually encoded in the trnK tRNA gene intron. Probably assists in splicing its own and other chloroplast group II introns. The chain is Maturase K from Lathyrus vestitus (Pacific pea).